The chain runs to 260 residues: ProSAAS (260 aa).

The N-terminal stretch at 1–33 is a signal peptide; it reads MAGSPLLWGPRAGGVGLLVLLLLGLFRPPPALC. The proSAAS(1-180) stretch occupies residues 34–215; sequence ARPVKEPRGL…SADSEGVAAP (182 aa). O-linked (GalNAc...) threonine glycosylation is present at threonine 53. Positions 165–188 are disordered; it reads RPRPPVYDDGPAGPDAEEAGDETP. Positions 179–188 are enriched in acidic residues; it reads DAEEAGDETP. A C-terminal inhibitory domain; interacts with PCSK1 region spans residues 221–260; the sequence is AADHDVGSELPPEGVLGALLRVKRLETPAPQVPARRLLPP. Serine 228 is a glycosylation site (O-linked (GalNAc...) serine). The Sufficient for inhibition of PCSK1 motif lies at 239-244; the sequence is LLRVKR. Threonine 247 is a glycosylation site (O-linked (GalNAc...) threonine).

Interacts via the C-terminal inhibitory domain with PCSK1 66 kDa form. Proteolytically cleaved in the Golgi. Post-translationally, O-glycosylated with a core 1 or possibly core 8 glycan. As to expression, expressed in brain and pancreas.

The protein resides in the secreted. Its subcellular location is the golgi apparatus. The protein localises to the trans-Golgi network. May function in the control of the neuroendocrine secretory pathway. Proposed be a specific endogenous inhibitor of PCSK1. ProSAAS and Big PEN-LEN, both containing the C-terminal inhibitory domain, but not the further processed peptides reduce PCSK1 activity in the endoplasmic reticulum and Golgi. It reduces the activity of the 84 kDa form but not the autocatalytically derived 66 kDa form of PCSK1. Subsequent processing of proSAAS may eliminate the inhibition. Slows down convertase-mediated processing of proopiomelanocortin and proenkephalin. May control the intracellular timing of PCSK1 rather than its total level of activity. Functionally, endogenous ligand for GPR171. Neuropeptide involved in the regulation of feeding. The sequence is that of ProSAAS (PCSK1N) from Homo sapiens (Human).